Reading from the N-terminus, the 276-residue chain is Rhomboid protease GlpG (276 aa).

Transmembrane regions (helical) follow at residues 94 to 114 (GPVT…MQIL), 142 to 162 (ALMH…WYLG), 169 to 189 (LGSG…GYVQ), 192 to 212 (FSGP…GYVW), 229 to 249 (LIIF…GMSM), and 250 to 270 (ANGA…VDSL). The Nucleophile role is filled by serine 201. Histidine 254 is an active-site residue.

The protein belongs to the peptidase S54 family.

The protein localises to the cell inner membrane. It carries out the reaction Cleaves type-1 transmembrane domains using a catalytic dyad composed of serine and histidine that are contributed by different transmembrane domains.. Its function is as follows. Rhomboid-type serine protease that catalyzes intramembrane proteolysis. The sequence is that of Rhomboid protease GlpG from Escherichia coli O81 (strain ED1a).